The primary structure comprises 194 residues: ATP-dependent Clp protease proteolytic subunit (194 aa).

Catalysis depends on serine 98, which acts as the Nucleophile. Histidine 123 is an active-site residue.

The protein belongs to the peptidase S14 family. In terms of assembly, fourteen ClpP subunits assemble into 2 heptameric rings which stack back to back to give a disk-like structure with a central cavity, resembling the structure of eukaryotic proteasomes.

The protein localises to the cytoplasm. It catalyses the reaction Hydrolysis of proteins to small peptides in the presence of ATP and magnesium. alpha-casein is the usual test substrate. In the absence of ATP, only oligopeptides shorter than five residues are hydrolyzed (such as succinyl-Leu-Tyr-|-NHMec, and Leu-Tyr-Leu-|-Tyr-Trp, in which cleavage of the -Tyr-|-Leu- and -Tyr-|-Trp bonds also occurs).. In terms of biological role, cleaves peptides in various proteins in a process that requires ATP hydrolysis. Has a chymotrypsin-like activity. Plays a major role in the degradation of misfolded proteins. This chain is ATP-dependent Clp protease proteolytic subunit, found in Sodalis glossinidius (strain morsitans).